The primary structure comprises 428 residues: tRNA dimethylallyltransferase (428 aa).

21–28 contributes to the ATP binding site; that stretch reads GTTGVGKS. Dimethylallyl diphosphate is bound at residue 23-28; sequence TGVGKS. 2 interaction with substrate tRNA regions span residues 46–49 and 170–174; these read DSMQ and RRVQR. The segment at 199–207 is core aggregation region; it reads FDTLFLWLY. Residues 210 to 232 are interaction with isopentenylpyrophosphate transferase; it reads PEPLFQRLDDRVDDMLERGALQE. Interaction with substrate tRNA stretches follow at residues 256-258 and 284-302; these read QVI and RMKT…WIKK. The Matrin-type zinc-finger motif lies at 373-409; it reads YTCNVCRNADGKNVVAIGEKYWKIHLGSRRHKSNLKR. Residues cysteine 375, cysteine 378, histidine 397, and histidine 403 each coordinate Zn(2+).

It belongs to the IPP transferase family.

It is found in the cytoplasm. Its subcellular location is the mitochondrion. The protein resides in the nucleus. The enzyme catalyses adenosine(37) in tRNA + dimethylallyl diphosphate = N(6)-dimethylallyladenosine(37) in tRNA + diphosphate. In terms of biological role, catalyzes the transfer of a dimethylallyl group onto the adenine at position 37 in the anticodon loop on a specific subset of tRNAs both in the cytosol and the mitochondrion, leading to the formation of N6-(dimethylallyl)adenosine (i(6)A). This modification optimizes the codon:anticodon fit in the ribosome and promotes translational fidelity. Competes with the farnesyl pyrophosphate synthase ERG20 for the common substrate dimethylallyl diphosphate (DMAPP). This Saccharomyces cerevisiae (strain ATCC 204508 / S288c) (Baker's yeast) protein is tRNA dimethylallyltransferase (MOD5).